Consider the following 1006-residue polypeptide: Probable beta-galactosidase A (1006 aa).

The signal sequence occupies residues 1-18; the sequence is MKLLSVCAVALLAAQAAG. Substrate-binding residues include Tyr-96, Asn-140, Ala-141, and Glu-142. Asn-156 carries N-linked (GlcNAc...) asparagine glycosylation. Position 199 (Asn-199) interacts with substrate. Glu-200 (proton donor) is an active-site residue. Residues Cys-205 and Cys-206 are joined by a disulfide bond. N-linked (GlcNAc...) asparagine glycosylation occurs at Asn-207. A substrate-binding site is contributed by Tyr-260. Cysteines 266 and 315 form a disulfide. Catalysis depends on Glu-298, which acts as the Nucleophile. Tyr-364 contacts substrate. Asn-373, Asn-402, Asn-422, Asn-622, Asn-777, and Asn-914 each carry an N-linked (GlcNAc...) asparagine glycan.

The protein belongs to the glycosyl hydrolase 35 family.

Its subcellular location is the secreted. It catalyses the reaction Hydrolysis of terminal non-reducing beta-D-galactose residues in beta-D-galactosides.. In terms of biological role, cleaves beta-linked terminal galactosyl residues from gangliosides, glycoproteins, and glycosaminoglycans. In Neosartorya fischeri (strain ATCC 1020 / DSM 3700 / CBS 544.65 / FGSC A1164 / JCM 1740 / NRRL 181 / WB 181) (Aspergillus fischerianus), this protein is Probable beta-galactosidase A (lacA).